The chain runs to 417 residues: NADH-quinone oxidoreductase subunit D (417 aa).

Belongs to the complex I 49 kDa subunit family. In terms of assembly, NDH-1 is composed of 14 different subunits. Subunits NuoB, C, D, E, F, and G constitute the peripheral sector of the complex.

The protein localises to the cell inner membrane. It carries out the reaction a quinone + NADH + 5 H(+)(in) = a quinol + NAD(+) + 4 H(+)(out). NDH-1 shuttles electrons from NADH, via FMN and iron-sulfur (Fe-S) centers, to quinones in the respiratory chain. The immediate electron acceptor for the enzyme in this species is believed to be ubiquinone. Couples the redox reaction to proton translocation (for every two electrons transferred, four hydrogen ions are translocated across the cytoplasmic membrane), and thus conserves the redox energy in a proton gradient. This is NADH-quinone oxidoreductase subunit D from Herminiimonas arsenicoxydans.